The sequence spans 169 residues: Cytochrome c oxidase subunit 4 isoform 1, mitochondrial (169 aa).

A mitochondrion-targeting transit peptide spans 1 to 22 (MLATRVFSLIGRRAISTSVCVR). The Mitochondrial matrix segment spans residues 23–98 (AHGSVVKSED…SFAEMNRSTN (76 aa)). At Lys-29 the chain carries N6-acetyllysine; alternate. Lys-29 is modified (N6-succinyllysine; alternate). Lys-53 is subject to N6-acetyllysine. Ser-56 and Ser-58 each carry phosphoserine. The residue at position 60 (Lys-60) is an N6-acetyllysine; alternate. The residue at position 60 (Lys-60) is an N6-succinyllysine; alternate. Lys-67 carries the N6-acetyllysine modification. The helical transmembrane segment at 99–124 (EWKTVVGAAMFFIGFTALLLIWEKHY) threads the bilayer. Residues 125–169 (VYGPIPHTFEEEWVAKQTKRMLDMKVAPIQGFSAKWDYDKNEWKK) lie on the Mitochondrial intermembrane side of the membrane.

It belongs to the cytochrome c oxidase IV family. As to quaternary structure, component of the cytochrome c oxidase (complex IV, CIV), a multisubunit enzyme composed of 14 subunits. The complex is composed of a catalytic core of 3 subunits MT-CO1, MT-CO2 and MT-CO3, encoded in the mitochondrial DNA, and 11 supernumerary subunits COX4I1 (or COX4I2), COX5A, COX5B, COX6A2 (or COX6A1), COX6B1 (or COX6B2), COX6C, COX7A1 (or COX7A2), COX7B, COX7C, COX8B and NDUFA4, which are encoded in the nuclear genome. The complex exists as a monomer or a dimer and forms supercomplexes (SCs) in the inner mitochondrial membrane with NADH-ubiquinone oxidoreductase (complex I, CI) and ubiquinol-cytochrome c oxidoreductase (cytochrome b-c1 complex, complex III, CIII), resulting in different assemblies (supercomplex SCI(1)III(2)IV(1) and megacomplex MCI(2)III(2)IV(2)). Interacts with PHB2; the interaction decreases in absence of SPHK2. Interacts with AFG1L. Interacts with ABCB7; this interaction allows the regulation of cellular iron homeostasis and cellular reactive oxygen species (ROS) levels in cardiomyocytes. Interacts with FLVCR2; this interaction occurs in the absence of heme and is disrupted upon heme binding. Interacts with IRGC.

Its subcellular location is the mitochondrion inner membrane. It participates in energy metabolism; oxidative phosphorylation. Component of the cytochrome c oxidase, the last enzyme in the mitochondrial electron transport chain which drives oxidative phosphorylation. The respiratory chain contains 3 multisubunit complexes succinate dehydrogenase (complex II, CII), ubiquinol-cytochrome c oxidoreductase (cytochrome b-c1 complex, complex III, CIII) and cytochrome c oxidase (complex IV, CIV), that cooperate to transfer electrons derived from NADH and succinate to molecular oxygen, creating an electrochemical gradient over the inner membrane that drives transmembrane transport and the ATP synthase. Cytochrome c oxidase is the component of the respiratory chain that catalyzes the reduction of oxygen to water. Electrons originating from reduced cytochrome c in the intermembrane space (IMS) are transferred via the dinuclear copper A center (CU(A)) of subunit 2 and heme A of subunit 1 to the active site in subunit 1, a binuclear center (BNC) formed by heme A3 and copper B (CU(B)). The BNC reduces molecular oxygen to 2 water molecules using 4 electrons from cytochrome c in the IMS and 4 protons from the mitochondrial matrix. This Bos taurus (Bovine) protein is Cytochrome c oxidase subunit 4 isoform 1, mitochondrial (COX4I1).